The chain runs to 354 residues: 3-isopropylmalate dehydrogenase (354 aa).

76–87 lines the NAD(+) pocket; sequence GPRWDSAKERPE. The substrate site is built by Arg94, Arg104, Arg130, and Asp215. Positions 215, 239, and 243 each coordinate Mg(2+). 273–285 contacts NAD(+); the sequence is GSAPDIAGKNKAN.

The protein belongs to the isocitrate and isopropylmalate dehydrogenases family. LeuB type 1 subfamily. As to quaternary structure, homodimer. The cofactor is Mg(2+). It depends on Mn(2+) as a cofactor.

It is found in the cytoplasm. The catalysed reaction is (2R,3S)-3-isopropylmalate + NAD(+) = 4-methyl-2-oxopentanoate + CO2 + NADH. The protein operates within amino-acid biosynthesis; L-leucine biosynthesis; L-leucine from 3-methyl-2-oxobutanoate: step 3/4. Functionally, catalyzes the oxidation of 3-carboxy-2-hydroxy-4-methylpentanoate (3-isopropylmalate) to 3-carboxy-4-methyl-2-oxopentanoate. The product decarboxylates to 4-methyl-2 oxopentanoate. The chain is 3-isopropylmalate dehydrogenase from Bacillus cereus (strain ATCC 14579 / DSM 31 / CCUG 7414 / JCM 2152 / NBRC 15305 / NCIMB 9373 / NCTC 2599 / NRRL B-3711).